Here is a 1171-residue protein sequence, read N- to C-terminus: DExH-box ATP-dependent RNA helicase DExH15 chloroplastic (1171 aa).

Residues 1 to 58 (MNTLPVVSLTASSSFKFFHFPSLHRSLSHSPNFSFTKSLILNPNHLSFKSTLNSLSPS) constitute a chloroplast transit peptide. Positions 53 to 62 (NSLSPSQSQL) are enriched in polar residues. The segment at 53–111 (NSLSPSQSQLYEEEDDEEEEEEDEDDDDEAADEYDNISDEIRNSDDDDDDEETEFSVDL) is disordered. Acidic residues-rich tracts occupy residues 63–90 (YEEE…DNIS) and 97–107 (DDDDDDEETEF). In terms of domain architecture, Helicase ATP-binding spans 163–327 (IEAFLRGSSV…WIGEIHGKTE (165 aa)). 176 to 183 (APTSSGKT) is an ATP binding site. Residues 275–278 (DEVH) carry the DEVH box motif. A Helicase C-terminal domain is found at 424 to 620 (QISDTLWHLQ…ASYGMVLNLV (197 aa)).

This sequence belongs to the DExH box helicase family.

The protein localises to the plastid. The protein resides in the chloroplast. It is found in the cytoplasmic granule. The catalysed reaction is ATP + H2O = ADP + phosphate + H(+). RNA helicase involved in group II intron splicing. Essential protein required during embryogenesis. Involved in post-transcriptional gene silencing. Modulates the determination of cell fate. Necessary for normal plasmodesmata (PD) development and aperture regulation. The protein is DExH-box ATP-dependent RNA helicase DExH15 chloroplastic (ISE2) of Arabidopsis thaliana (Mouse-ear cress).